We begin with the raw amino-acid sequence, 129 residues long: M-zodatoxin-Lt8e (129 aa).

The N-terminal stretch at 1–20 (MKYFVVALALVAAFVCIAES) is a signal peptide. The propeptide occupies 21-60 (KPAESEHELAEVEEENELADLEDAVWLEHLADLSDLEEAR). Residues 57-60 (EEAR) carry the Processing quadruplet motif motif.

In terms of processing, cleavage of the propeptide depends on the processing quadruplet motif (XXXR, with at least one of X being E). As to expression, expressed by the venom gland.

Its subcellular location is the secreted. In terms of biological role, insecticidal, cytolytic and antimicrobial peptide. Forms voltage-dependent, ion-permeable channels in membranes. At high concentration causes cell membrane lysis. The polypeptide is M-zodatoxin-Lt8e (cit 1-5) (Lachesana tarabaevi (Spider)).